The following is a 220-amino-acid chain: Deoxyribose-phosphate aldolase (220 aa).

Catalysis depends on Asp-89, which acts as the Proton donor/acceptor. Lys-151 (schiff-base intermediate with acetaldehyde) is an active-site residue. Residue Lys-180 is the Proton donor/acceptor of the active site.

Belongs to the DeoC/FbaB aldolase family. DeoC type 1 subfamily.

The protein resides in the cytoplasm. The enzyme catalyses 2-deoxy-D-ribose 5-phosphate = D-glyceraldehyde 3-phosphate + acetaldehyde. The protein operates within carbohydrate degradation; 2-deoxy-D-ribose 1-phosphate degradation; D-glyceraldehyde 3-phosphate and acetaldehyde from 2-deoxy-alpha-D-ribose 1-phosphate: step 2/2. Functionally, catalyzes a reversible aldol reaction between acetaldehyde and D-glyceraldehyde 3-phosphate to generate 2-deoxy-D-ribose 5-phosphate. The sequence is that of Deoxyribose-phosphate aldolase from Streptococcus pneumoniae (strain CGSP14).